Here is a 207-residue protein sequence, read N- to C-terminus: Large ribosomal subunit protein uL4 (207 aa).

Residues 45–78 (RQGTHAVKNRSAVSGGGRKPWRQKGTGRARQGSI) form a disordered region.

It belongs to the universal ribosomal protein uL4 family. As to quaternary structure, part of the 50S ribosomal subunit.

One of the primary rRNA binding proteins, this protein initially binds near the 5'-end of the 23S rRNA. It is important during the early stages of 50S assembly. It makes multiple contacts with different domains of the 23S rRNA in the assembled 50S subunit and ribosome. In terms of biological role, forms part of the polypeptide exit tunnel. This Lacticaseibacillus paracasei (strain ATCC 334 / BCRC 17002 / CCUG 31169 / CIP 107868 / KCTC 3260 / NRRL B-441) (Lactobacillus paracasei) protein is Large ribosomal subunit protein uL4.